The following is a 246-amino-acid chain: UDP-N-acetyl-D-mannosaminuronic acid transferase (246 aa).

The protein belongs to the glycosyltransferase 26 family.

The enzyme catalyses UDP-N-acetyl-alpha-D-mannosaminouronate + N-acetyl-alpha-D-glucosaminyl-di-trans,octa-cis-undecaprenyl diphosphate = beta-D-ManNAcA-(1-&gt;4)-alpha-D-GlcNAc-di-trans,octa-cis-undecaprenyl diphosphate + UDP + H(+). Its pathway is bacterial outer membrane biogenesis; enterobacterial common antigen biosynthesis. Functionally, catalyzes the synthesis of Und-PP-GlcNAc-ManNAcA (Lipid II), the second lipid-linked intermediate involved in enterobacterial common antigen (ECA) synthesis. This is UDP-N-acetyl-D-mannosaminuronic acid transferase from Salmonella arizonae (strain ATCC BAA-731 / CDC346-86 / RSK2980).